A 283-amino-acid polypeptide reads, in one-letter code: MAITAAQVKELRDRTGAGMMDCKNALTETNGDIELAIDNMRKSGAAKAAKKAGNIAADGTILIKNGEGFAALLEVNCQTDFVAKDSNFLAFANAVLDVAAASKVTIEELKAQFEETRVALVTKIGENINVRRVEYIDGANLASYRHGERIGVVVAGEADEETLKHIAMHVAASKPEFVNPEDVPAELVEREQALQIEIAMNEGKPAEIAEKMVVGRMKKFTGEISLTGQAFIMEPKKTVGEILKEKKASVSNFIRLEVGEGIEKKEEDFAAEVAAQIAATKKA.

Residues 79 to 82 form an involved in Mg(2+) ion dislocation from EF-Tu region; sequence TDFV.

It belongs to the EF-Ts family.

The protein localises to the cytoplasm. Its function is as follows. Associates with the EF-Tu.GDP complex and induces the exchange of GDP to GTP. It remains bound to the aminoacyl-tRNA.EF-Tu.GTP complex up to the GTP hydrolysis stage on the ribosome. The protein is Elongation factor Ts of Shewanella denitrificans (strain OS217 / ATCC BAA-1090 / DSM 15013).